Here is a 109-residue protein sequence, read N- to C-terminus: MPTSANKVETAWSALLAGAAETRQEHLAPSPLFILRQTLFCVLAAYLFCGAGMVWNDWIDRDIDANVARTKNRPLASGKVTTAQAFVWMALQVIASCAVLHVMLDGKDV.

Transmembrane regions (helical) follow at residues 39-59 (LFCV…NDWI) and 84-104 (QAFV…HVML).

Belongs to the UbiA prenyltransferase family. Mg(2+) is required as a cofactor.

Its subcellular location is the membrane. It participates in secondary metabolite biosynthesis; terpenoid biosynthesis. Polyprenyl transferase; part of the gene cluster that mediates the biosynthesis of the immunosuppressants subglutinols, meroterpenoids consisting of an alpha-pyrone (4-hydroxy-5,6-dimethyl-2-pyrone) moiety attached to a decalin core fused to a five-membered cyclic ether carrying a prenylside chain. The first step of the pathway is the synthesis of the alpha-pyrone moiety by the polyketide synthase subA via condensation of one acetyl-CoA starter unit with 3 malonyl-CoA units and 2 methylations. The alpha-pyrone is then combined with geranylgeranyl pyrophosphate (GGPP) formed by the GGPP synthase subD through the action of the prenyltransferase subC to yield a linear alpha-pyrone diterpenoid. Subsequent steps in the subglutinol biosynthetic pathway involve the decalin core formation, which is thought to be initiated by the epoxidation of the C10-C11 olefin by the FAD-dependent oxidoreductase subE. The following cyclization cascade would be catalyzed by the terpene cyclase subB. Lastly, the FAD-dependent dehydrogenase subF probably catalyzes the five-membered cyclic ether formation to complete the formation of subglutinol A. Subsequent redox reactions appear to give rise to subglutinol C and D, however, it remains unclear which enzymes are responsible for these transformations. SubD may have secondary function in the conversion of the identified subglutinols to subglutinol analog 45, which seems to be the major product of the cluster. In Metarhizium robertsii (strain ARSEF 23 / ATCC MYA-3075) (Metarhizium anisopliae (strain ARSEF 23)), this protein is Polyprenyl transferase subC.